Consider the following 233-residue polypeptide: tRNA (guanine-N(7)-)-methyltransferase (233 aa).

Positions 62, 87, 116, and 138 each coordinate S-adenosyl-L-methionine. Aspartate 138 is a catalytic residue. Substrate-binding positions include lysine 142, aspartate 174, and 212–215 (TRYE).

This sequence belongs to the class I-like SAM-binding methyltransferase superfamily. TrmB family.

The enzyme catalyses guanosine(46) in tRNA + S-adenosyl-L-methionine = N(7)-methylguanosine(46) in tRNA + S-adenosyl-L-homocysteine. The protein operates within tRNA modification; N(7)-methylguanine-tRNA biosynthesis. Its function is as follows. Catalyzes the formation of N(7)-methylguanine at position 46 (m7G46) in tRNA. This chain is tRNA (guanine-N(7)-)-methyltransferase, found in Bartonella henselae (strain ATCC 49882 / DSM 28221 / CCUG 30454 / Houston 1) (Rochalimaea henselae).